The primary structure comprises 187 residues: Signal peptidase I U (187 aa).

At 1–16 the chain is on the cytoplasmic side; sequence MNAKTITLKKKRKIKT. A helical transmembrane segment spans residues 17-37; that stretch reads IVVLSIIMIAALIFTIRLVFY. The Extracellular portion of the chain corresponds to 38–187; that stretch reads KPFLIEGSSM…YPFGEMRQAK (150 aa). Catalysis depends on residues serine 46 and lysine 88.

Belongs to the peptidase S26 family.

It localises to the cell membrane. It carries out the reaction Cleavage of hydrophobic, N-terminal signal or leader sequences from secreted and periplasmic proteins.. The sequence is that of Signal peptidase I U (sipU) from Bacillus subtilis (strain 168).